The primary structure comprises 481 residues: MEDMLSFFSSGLHVMLVDDDTKNTRTATKTLSMLHCPVVSTHTTACAGLRTLSGDNMLDVQTVLCDVSKVVSSGFDFRRVNETEHQIPVIYLLSTTEPEQMVAGEDAEFLNHLLLKATYILRKPLDWATIALWRVVAWHRCCLEERVPGDSMDDIAAHAGAGGEDGNDDDVVVIEEPQVHFKLVRSRGSRKRQLTINVDSGSSDSADANQRKKIEHMNDAKGPVGQHVASHLQLPAQEYCTKQQKDLDERRLISSDSLFLKAIFPTLNVSPSSPLILAGGAVPTAFIPRVGMTVNIGKAPMIELPFGVPVDDFLVGETAYGGAGPSIGAPSNDAAVAYAYTGALNNNTAVGSLMAPPIDEPTFTLTDPIVGTKGEGVVHIVITSEDQNALAAVEAGAPNNAEPFMMPDQVDLEEDIMFSLESLLGLDEDMIPMEDAGGEAAEGSLNIGEGGMEIGWDLDLDDILMNNTNEFAFLDDLAWIE.

One can recognise a Response regulatory domain in the interval histidine 13–tryptophan 138. Aspartate 66 bears the 4-aspartylphosphate mark.

It belongs to the ARR family. Type-B subfamily. In terms of processing, two-component system major event consists of a His-to-Asp phosphorelay between a sensor histidine kinase (HK) and a response regulator (RR). In plants, the His-to-Asp phosphorelay involves an additional intermediate named Histidine-containing phosphotransfer protein (HPt). This multistep phosphorelay consists of a His-Asp-His-Asp sequential transfer of a phosphate group between first a His and an Asp of the HK protein, followed by the transfer to a conserved His of the HPt protein and finally the transfer to an Asp in the receiver domain of the RR protein.

In terms of biological role, functions as a response regulator involved in His-to-Asp phosphorelay signal transduction system. Phosphorylation of the Asp residue in the receiver domain activates the ability of the protein to promote the transcription of target genes. May directly activate some type-A response regulators in response to cytokinins. In Oryza sativa subsp. japonica (Rice), this protein is Two-component response regulator ORR32.